The sequence spans 934 residues: Isoleucine--tRNA ligase (934 aa).

The 'HIGH' region signature appears at 58-68 (PYANGEIHIGH). Glu-559 provides a ligand contact to L-isoleucyl-5'-AMP. A 'KMSKS' region motif is present at residues 600 to 604 (KMSKS). Lys-603 is an ATP binding site. The Zn(2+) site is built by Cys-897, Cys-900, Cys-917, and Cys-920.

Belongs to the class-I aminoacyl-tRNA synthetase family. IleS type 1 subfamily. Monomer. The cofactor is Zn(2+).

It is found in the cytoplasm. The catalysed reaction is tRNA(Ile) + L-isoleucine + ATP = L-isoleucyl-tRNA(Ile) + AMP + diphosphate. Functionally, catalyzes the attachment of isoleucine to tRNA(Ile). As IleRS can inadvertently accommodate and process structurally similar amino acids such as valine, to avoid such errors it has two additional distinct tRNA(Ile)-dependent editing activities. One activity is designated as 'pretransfer' editing and involves the hydrolysis of activated Val-AMP. The other activity is designated 'posttransfer' editing and involves deacylation of mischarged Val-tRNA(Ile). The sequence is that of Isoleucine--tRNA ligase from Teredinibacter turnerae (strain ATCC 39867 / T7901).